Reading from the N-terminus, the 658-residue chain is Probable methyl-accepting chemotaxis protein BT9727_0469 (658 aa).

At 1-14 (MLQGKLRRSSLKAK) the chain is on the cytoplasmic side. A helical transmembrane segment spans residues 15–35 (LLVSFVIVLILPSIVIGWTSY). The Extracellular segment spans residues 36 to 283 (QQAKTNFNET…ANPIFYKTLT (248 aa)). A coiled-coil region spans residues 44–109 (ETILQSAEDN…NKLHPEIEAI (66 aa)). The Cache domain occupies 150–221 (ITAPYKSSTT…AHPTMKPGDK (72 aa)). The chain crosses the membrane as a helical span at residues 284–304 (VIGISLIIGGVLIYFIIASII). The 53-residue stretch at 301–353 (ASIISPLKQLVISSKKISEGDLTETITVHSKDEIGQLGESFNEMAASLHHVIS) folds into the HAMP domain. The Cytoplasmic portion of the chain corresponds to 305 to 658 (SPLKQLVISS…LQEMIGKFKV (354 aa)). Position 368 is a glutamate methyl ester (Glu) (E368). Residues 372–622 (SMKQTSEATE…ENAASVQNIA (251 aa)) form the Methyl-accepting transducer domain. Deamidated glutamine is present on Q592. Q592 is subject to Glutamate methyl ester (Gln). E627 and E634 each carry glutamate methyl ester (Glu).

It belongs to the methyl-accepting chemotaxis (MCP) protein family.

It localises to the cell membrane. Chemotactic-signal transducers respond to changes in the concentration of attractants and repellents in the environment, transduce a signal from the outside to the inside of the cell, and facilitate sensory adaptation through the variation of the level of methylation. The sequence is that of Probable methyl-accepting chemotaxis protein BT9727_0469 from Bacillus thuringiensis subsp. konkukian (strain 97-27).